A 216-amino-acid chain; its full sequence is Homologous-pairing protein 2 (216 aa).

This sequence belongs to the HOP2 family. As to quaternary structure, interacts with mcp7.

Its subcellular location is the nucleus. In terms of biological role, required for proper homologous pairing and efficient cross-over and intragenic recombination during meiosis. Acts indirectly in a process facilitating homologous recombination. Acts during mid- to late-horse-tail period. The sequence is that of Homologous-pairing protein 2 (meu13) from Schizosaccharomyces pombe (strain 972 / ATCC 24843) (Fission yeast).